We begin with the raw amino-acid sequence, 344 residues long: N-acetyl-gamma-glutamyl-phosphate reductase (344 aa).

The active site involves Cys-150.

It belongs to the NAGSA dehydrogenase family. Type 1 subfamily.

It localises to the cytoplasm. It catalyses the reaction N-acetyl-L-glutamate 5-semialdehyde + phosphate + NADP(+) = N-acetyl-L-glutamyl 5-phosphate + NADPH + H(+). It participates in amino-acid biosynthesis; L-arginine biosynthesis; N(2)-acetyl-L-ornithine from L-glutamate: step 3/4. In terms of biological role, catalyzes the NADPH-dependent reduction of N-acetyl-5-glutamyl phosphate to yield N-acetyl-L-glutamate 5-semialdehyde. The protein is N-acetyl-gamma-glutamyl-phosphate reductase of Pseudomonas entomophila (strain L48).